Consider the following 439-residue polypeptide: tRNA-2-methylthio-N(6)-dimethylallyladenosine synthase (439 aa).

The MTTase N-terminal domain occupies 2–116 (LKVYIETMGC…ISQVIHKEKA (115 aa)). Residues C11, C47, C79, C149, C153, and C156 each contribute to the [4Fe-4S] cluster site. In terms of domain architecture, Radical SAM core spans 135 to 368 (KKAEVRSLLN…QNRHKEILEE (234 aa)). In terms of domain architecture, TRAM spans 371-437 (RLEVGKTHVV…KGRLMATTKN (67 aa)).

It belongs to the methylthiotransferase family. MiaB subfamily. Monomer. [4Fe-4S] cluster serves as cofactor.

The protein resides in the cytoplasm. The catalysed reaction is N(6)-dimethylallyladenosine(37) in tRNA + (sulfur carrier)-SH + AH2 + 2 S-adenosyl-L-methionine = 2-methylsulfanyl-N(6)-dimethylallyladenosine(37) in tRNA + (sulfur carrier)-H + 5'-deoxyadenosine + L-methionine + A + S-adenosyl-L-homocysteine + 2 H(+). In terms of biological role, catalyzes the methylthiolation of N6-(dimethylallyl)adenosine (i(6)A), leading to the formation of 2-methylthio-N6-(dimethylallyl)adenosine (ms(2)i(6)A) at position 37 in tRNAs that read codons beginning with uridine. In Helicobacter acinonychis (strain Sheeba), this protein is tRNA-2-methylthio-N(6)-dimethylallyladenosine synthase.